The sequence spans 587 residues: MAATAYEHLKLHITPEKFYVEACDDGADDVLIIDRVSTEVTLAVKKDVPPSAVTRPIYGIMGTIHLVAGNYLVVITKKMKVGEFFNHVIWKATDFDVLSYKKTMLHLTDIQLQDNKTFLAMLNHVLSTDGFYFSTTYDLTHTLQRLSNTSPEFQEMSLLERADQRFVWNGHLLRELSAQPEVHRFALPVLHGFITMHSCSINGKYFDWILISRRSCFRAGVRYYVRGIDSEGHAANFVETEQIVHYSGNRASFVQTRGSIPVFWSQRPNLKYKPDPQINKVANHMDGFQRHFDSQVIIYGKQVIINLVNHKGSEKPLEQTFAKMVSSLGSGMIRYIAFDFHKECKNMRWDRLSILLDQVAEMQDELSYFLVDSAGKVVTNQEGVFRSNCMDCLDRTNVIQSLLARRSLQAQLQRLGVLHVGQKLEEQDEFEKIYKNAWADNANACAKQYAGTGALKTDFTRTGKRTQLGLVMDGFNSLLRYYKNNFSDGFRQDSIDLFLGNYSVDELDSHSPLSVPRDWKFLALPIIMVVAFSMCIICLLMAGDTWTETLAYVLFWGVASIGTFFIILYNGKDFVDAPRLVQKEKID.

Over 1 to 520 the chain is Cytoplasmic; it reads MAATAYEHLK…SPLSVPRDWK (520 aa). The region spanning 122–451 is the SAC domain; it reads LNHVLSTDGF…ANACAKQYAG (330 aa). An essential for phosphatidylinositol-4-phosphate phosphatase activity region spans residues 452 to 587; that stretch reads TGALKTDFTR…PRLVQKEKID (136 aa). Residue K456 is modified to N6-acetyllysine. The helical transmembrane segment at 521 to 541 threads the bilayer; sequence FLALPIIMVVAFSMCIICLLM. Residues 542–548 are Lumenal-facing; the sequence is AGDTWTE. The helical transmembrane segment at 549 to 569 threads the bilayer; that stretch reads TLAYVLFWGVASIGTFFIILY. The Cytoplasmic segment spans residues 570-587; the sequence is NGKDFVDAPRLVQKEKID.

Interacts with TMEM39A. Interacts with SEC23A and SEC24A; this interaction is reduced in the absence of TMEM39A. Interacts with PLEKHA3 and VAPA and/or VAPB to form a ternary complex. In terms of tissue distribution, detected in spleen, lung, liver, skeletal muscle, kidney, testis and in cerebellar Purkinje cells (at protein level). Ubiquitous. Highly expressed in brain, spleen, liver and kidney.

Its subcellular location is the endoplasmic reticulum membrane. It is found in the golgi apparatus membrane. The catalysed reaction is a 1,2-diacyl-sn-glycero-3-phospho-(1D-myo-inositol-3-phosphate) + H2O = a 1,2-diacyl-sn-glycero-3-phospho-(1D-myo-inositol) + phosphate. It carries out the reaction a 1,2-diacyl-sn-glycero-3-phospho-(1D-myo-inositol 4-phosphate) + H2O = a 1,2-diacyl-sn-glycero-3-phospho-(1D-myo-inositol) + phosphate. Its function is as follows. Phosphoinositide phosphatase which catalyzes the hydrolysis of phosphatidylinositol 4-phosphate (PtdIns(4)P), phosphatidylinositol 3-phosphate (PtdIns(3)P) and has low activity towards phosphatidylinositol-3,5-bisphosphate (PtdIns(3,5)P2). Shows a very robust PtdIns(4)P phosphatase activity when it binds PtdIns(4)P in a 'cis' configuration in the cellular environment, with much less activity seen when it binds PtdIns(4)P in 'trans' configuration. PtdIns(4)P phosphatase activity (when it binds PtdIns(4)P in 'trans' configuration) is enhanced in the presence of PLEKHA3. In Rattus norvegicus (Rat), this protein is Phosphatidylinositol-3-phosphatase SAC1 (Sacm1l).